We begin with the raw amino-acid sequence, 508 residues long: MKTAATFSALQDLDADLLIFPFSSEGLKKAASPVLEAAGLSDAPLDDFKAAAGDTLVLYPRPGKLRAPRVMLVGTGEAGSLDDWHRAATAAASRAVDLEARRIVFDLPAAGGKAKPGIEAVAETLVEGCLFGAYRFERLKSGKLDKGEKKTAAKGKAKKAEKGIDLLTLRVPASALAAAEKGMASGLVIGSAQEMARNLVNLPGNHLQAEDIARAAAASGKQYGYGVTVLRKKEIESLRMGGLVAVNQGSLNPPTFTVMDYVPKKKAKATIALVGKGVTFDSGGISIKPSEGMGDMKSDMAGAAAVIGAVEAAARLALPVRIIGLIPATDNMPDGNAQKPGDVITTYSGITVEVGNTDAEGRLILADALTYAAQKYSPDAIIDLATLTGACIVALGYQVAGLFSNDDALAGAIEGAARDTGEKVWRLPLWELYDEQIKSDVADVSNTGSRGAGTITAAKFLEKFIDGHKKWAHIDIAGPSFPAKGAAKVNGGSGFGVRLLVELLRKWS.

Residues Lys-276 and Asp-281 each coordinate Mn(2+). Lys-288 is a catalytic residue. 3 residues coordinate Mn(2+): Asp-299, Asp-358, and Glu-360. Residue Arg-362 is part of the active site.

It belongs to the peptidase M17 family. It depends on Mn(2+) as a cofactor.

It localises to the cytoplasm. The catalysed reaction is Release of an N-terminal amino acid, Xaa-|-Yaa-, in which Xaa is preferably Leu, but may be other amino acids including Pro although not Arg or Lys, and Yaa may be Pro. Amino acid amides and methyl esters are also readily hydrolyzed, but rates on arylamides are exceedingly low.. It catalyses the reaction Release of an N-terminal amino acid, preferentially leucine, but not glutamic or aspartic acids.. In terms of biological role, presumably involved in the processing and regular turnover of intracellular proteins. Catalyzes the removal of unsubstituted N-terminal amino acids from various peptides. This Chlorobium luteolum (strain DSM 273 / BCRC 81028 / 2530) (Pelodictyon luteolum) protein is Probable cytosol aminopeptidase.